The following is a 255-amino-acid chain: Acetyl-coenzyme A carboxylase carboxyl transferase subunit alpha (255 aa).

The CoA carboxyltransferase C-terminal domain maps to 1 to 235 (MNIAKIVREA…KKELQTELAR (235 aa)).

Belongs to the AccA family. Acetyl-CoA carboxylase is a heterohexamer composed of biotin carboxyl carrier protein (AccB), biotin carboxylase (AccC) and two subunits each of ACCase subunit alpha (AccA) and ACCase subunit beta (AccD).

It localises to the cytoplasm. It catalyses the reaction N(6)-carboxybiotinyl-L-lysyl-[protein] + acetyl-CoA = N(6)-biotinyl-L-lysyl-[protein] + malonyl-CoA. The protein operates within lipid metabolism; malonyl-CoA biosynthesis; malonyl-CoA from acetyl-CoA: step 1/1. Component of the acetyl coenzyme A carboxylase (ACC) complex. First, biotin carboxylase catalyzes the carboxylation of biotin on its carrier protein (BCCP) and then the CO(2) group is transferred by the carboxyltransferase to acetyl-CoA to form malonyl-CoA. The polypeptide is Acetyl-coenzyme A carboxylase carboxyl transferase subunit alpha (Streptococcus pneumoniae serotype 19F (strain G54)).